The following is a 323-amino-acid chain: uncharacterized protein (323 aa).

The 80-residue stretch at 16–95 (QRIDQFCLKI…DKLKIIFEDE (80 aa)) folds into the S4 RNA-binding domain. The active site involves Asp-148.

This sequence belongs to the pseudouridine synthase RluA family.

The catalysed reaction is a uridine in RNA = a pseudouridine in RNA. This is an uncharacterized protein from Mycoplasma genitalium (strain ATCC 33530 / DSM 19775 / NCTC 10195 / G37) (Mycoplasmoides genitalium).